A 684-amino-acid chain; its full sequence is Nuclear transcription factor Y subunit gamma (684 aa).

Disordered stretches follow at residues 1–74, 112–238, 414–487, and 511–650; these read MENQ…NIST, MNSP…SSFQ, HSPQ…TQQL, and QQQQ…KNDE. A compositionally biased stretch (low complexity) spans 21 to 49; it reads SNSHNNHHNNNNNNNYNNNNNNNINNINN. The span at 58-74 shows a compositional bias: polar residues; the sequence is KSIQQHSPHSSTPNIST. Residues 142–162 show a composition bias toward low complexity; sequence HQHPSSASSSSSSSSSSLSSS. Residues 163 to 176 show a composition bias toward basic residues; the sequence is SHHHHSNHHHHHPN. The segment covering 188 to 203 has biased composition (polar residues); that stretch reads PSLNDSSSNGNGTPAL. Over residues 220-238 the composition is skewed to low complexity; sequence TPTSTPNQRFQSNGSSSFQ. Positions 414 to 423 are enriched in polar residues; sequence HSPQLQEQSS. The segment covering 424–437 has biased composition (low complexity); the sequence is NNNNNNNNNNNNNN. Polar residues-rich tracts occupy residues 438–456 and 464–477; these read SVSV…SPLS and SQDY…NNHN. Composition is skewed to low complexity over residues 478-487, 511-522, and 529-637; these read QSSLSQTQQL, QQQQHSQQISQQ, and PSNS…NNNN.

The protein belongs to the NFYC/HAP5 subunit family. As to quaternary structure, heterotrimeric transcription factor composed of three components, NF-YA, NF-YB and NF-YC. NF-YB and NF-YC must interact and dimerize for NF-YA association and DNA binding.

The protein localises to the nucleus. In terms of biological role, stimulates the transcription of various genes by recognizing and binding to a CCAAT motif in promoters. This Dictyostelium discoideum (Social amoeba) protein is Nuclear transcription factor Y subunit gamma (nfyc-1).